The primary structure comprises 360 residues: UPF0283 membrane protein Oant_2119 (360 aa).

Positions 1-30 are disordered; it reads MTEKTPRKPASFTVSQASNRPEAADEAPRR. 2 helical membrane passes run 77–97 and 108–128; these read ILFGALGILVSFAIGIWTEDL and LGWTALGVAIIALAAFIAIVV.

The protein belongs to the UPF0283 family.

The protein localises to the cell inner membrane. This chain is UPF0283 membrane protein Oant_2119, found in Brucella anthropi (strain ATCC 49188 / DSM 6882 / CCUG 24695 / JCM 21032 / LMG 3331 / NBRC 15819 / NCTC 12168 / Alc 37) (Ochrobactrum anthropi).